The sequence spans 1379 residues: Hepatocyte growth factor receptor (1379 aa).

An N-terminal signal peptide occupies residues 1 to 24 (MKAPTVLAPGILVLLLSLVQRSHG). Topologically, residues 25 to 931 (ECKEALVKSE…VIVQPDQNFA (907 aa)) are extracellular. In terms of domain architecture, Sema spans 27-514 (KEALVKSEMN…TGKKITKIPL (488 aa)). A glycan (N-linked (GlcNAc...) asparagine) is linked at N45. 4 disulfides stabilise this stretch: C95–C101, C98–C160, C133–C141, and C171–C174. Residue N106 is glycosylated (N-linked (GlcNAc...) asparagine). N201 and N357 each carry an N-linked (GlcNAc...) asparagine glycan. 2 cysteine pairs are disulfide-bonded: C297-C362 and C384-C396. N-linked (GlcNAc...) asparagine glycosylation is found at N398 and N404. 4 disulfides stabilise this stretch: C519/C537, C525/C560, C528/C544, and C540/C550. 3 IPT/TIG domains span residues 562-654 (PAVY…FSYV), 656-738 (PVIT…FSYR), and 741-835 (PVVY…LTYV). O-linked (Man) threonine glycosylation is present at T581. N-linked (GlcNAc...) asparagine glycans are attached at residues N606 and N634. O-linked (Man) threonine glycans are attached at residues T675 and T760. N-linked (GlcNAc...) asparagine glycans are attached at residues N784 and N878. The helical transmembrane segment at 932–954 (GLIIGAVSISVVVLLLSGLFLWM) threads the bilayer. Over 955–1379 (RKRKHKDLGS…QDNIDGEGNT (425 aa)) the chain is Cytoplasmic. S964 carries the post-translational modification Phosphoserine. T975 is modified (phosphothreonine). Residues S988, S995, and S998 each carry the phosphoserine modification. Y1001 is modified (phosphotyrosine). Residues 1076-1343 (VHFNEVIGRG…RISSIFSTFI (268 aa)) enclose the Protein kinase domain. ATP contacts are provided by residues 1082–1090 (IGRGHFGCV) and K1108. The active-site Proton acceptor is the D1202. The interaction with RANBP9 stretch occupies residues 1210-1379 (LDEKFTVKVA…QDNIDGEGNT (170 aa)). At Y1228 the chain carries Phosphotyrosine. Phosphotyrosine; by autocatalysis occurs at positions 1232 and 1233. T1287 is modified (phosphothreonine). An interaction with MUC20 region spans residues 1318–1357 (WHPKAEMRPSFSELVSRISSIFSTFIGEHYVHVNATYVNV). Y1347 and Y1354 each carry phosphotyrosine; by autocatalysis. Phosphotyrosine is present on Y1363.

Belongs to the protein kinase superfamily. Tyr protein kinase family. In terms of assembly, heterodimer made of an alpha chain (50 kDa) and a beta chain (145 kDa) which are disulfide linked. Binds PLXNB1. Interacts when phosphorylated with downstream effectors including STAT3, PIK3R1, SRC, PCLG1, GRB2 and GAB1. When phosphorylated at Tyr-1354, interacts with INPPL1/SHIP2. Interacts with RANBP9 and RANBP10. Interacts with INPP5D/SHIP1. Interacts with SPSB1, SPSB2, SPSB4 and probably SPSB3. SPSB1 binding occurs in the presence and in the absence of HGF, however HGF treatment has a positive effect on this interaction. Interacts with MUC20; prevents interaction with GRB2 and suppresses hepatocyte growth factor-induced cell proliferation. Interacts with GRB10. Interacts with PTPN1 and PTPN2. Interacts with HSP90AA1 and HSP90AB1; the interaction suppresses MET kinase activity. Interacts with tensin TNS3. Interacts (when phosphorylated) with tensin TNS4 (via SH2 domain); the interaction increases MET protein stability by inhibiting MET endocytosis and subsequent lysosomal degradation. (Microbial infection) Interacts with L.monocytogenes InlB. InlB probably dimerizes upon binding to MET, which encourages subsequent dimerization of MET. Autophosphorylated in response to ligand binding on Tyr-1232 and Tyr-1233 in the kinase domain leading to further phosphorylation of Tyr-1347 and Tyr-1354 in the C-terminal multifunctional docking site. Dephosphorylated by PTPRJ at Tyr-1347 and Tyr-1363. Dephosphorylated by PTPN1 and PTPN2. In terms of processing, ubiquitinated. Ubiquitination by CBL regulates MET endocytosis, resulting in decreasing plasma membrane receptor abundance, and in endosomal degradation and/or recycling of internalized receptors. Post-translationally, O-mannosylation of IPT/TIG domains by TMEM260 is required for protein maturation. O-mannosylated residues are composed of single mannose glycans that are not elongated or modified. (Microbial infection) Tyrosine phosphorylation is stimulated by L.monocytogenes InlB.

It is found in the membrane. The enzyme catalyses L-tyrosyl-[protein] + ATP = O-phospho-L-tyrosyl-[protein] + ADP + H(+). Its activity is regulated as follows. In its inactive state, the C-terminal tail interacts with the catalytic domain and inhibits the kinase activity. Upon ligand binding, the C-terminal tail is displaced and becomes phosphorylated, thus increasing the kinase activity. Its function is as follows. Receptor tyrosine kinase that transduces signals from the extracellular matrix into the cytoplasm by binding to hepatocyte growth factor/HGF ligand. Regulates many physiological processes including proliferation, scattering, morphogenesis and survival. Ligand binding at the cell surface induces autophosphorylation of MET on its intracellular domain that provides docking sites for downstream signaling molecules. Following activation by ligand, interacts with the PI3-kinase subunit PIK3R1, PLCG1, SRC, GRB2, STAT3 or the adapter GAB1. Recruitment of these downstream effectors by MET leads to the activation of several signaling cascades including the RAS-ERK, PI3 kinase-AKT, or PLCgamma-PKC. The RAS-ERK activation is associated with the morphogenetic effects while PI3K/AKT coordinates prosurvival effects. During embryonic development, MET signaling plays a role in gastrulation, development and migration of neuronal precursors, angiogenesis and kidney formation. During skeletal muscle development, it is crucial for the migration of muscle progenitor cells and for the proliferation of secondary myoblasts. In adults, participates in wound healing as well as organ regeneration and tissue remodeling. Also promotes differentiation and proliferation of hematopoietic cells. May regulate cortical bone osteogenesis. (Microbial infection) Acts as a receptor for Listeria monocytogenes internalin InlB, mediating entry of the pathogen into cells. The protein is Hepatocyte growth factor receptor (Met) of Mus musculus (Mouse).